We begin with the raw amino-acid sequence, 161 residues long: MPSFDTVCEANLVEVKNAVENSAKEIGTRFDFKGTSAAIEIKDKEITLFGDAEFQLQQVEDILRNKLTKRNVDVRFLDKGDVQKIGGDKVKQVIKVRNGIESELAKKIQKLVKESKIKVQAAIQEEKVRVTGAKRDDLQAVMALIRKDITDVPLSFDNFRD.

Belongs to the YajQ family.

In terms of biological role, nucleotide-binding protein. This is Nucleotide-binding protein Aave_1854 from Paracidovorax citrulli (strain AAC00-1) (Acidovorax citrulli).